Consider the following 337-residue polypeptide: MRPPGFWHAPPDALGWRARALAPLGALYAAATARRVARPPAHRPGIPVICVGNINAGGTGKTPTVIALQMILAARGIAAHVVSRGYGGRLEGPVAVDPRRHDAAEVGDEPLLLAAFGPTWVARDRAAGARAAEGAGAQAILLDDGFQNPTLAKDLSLVVVDAQRGFGNGRVIPAGPLREPVARGLARADLLLTIGPPAAQARFDALWGPATVTLPHLRGALTPLQTGMRWEGLRAVAFAGIGHPQKFFDTLQDQGVILCATHPLDDHQPLDARLITRLLADAKAQGAQLVTTEKDAVRLPAELRGQVLSLPVRLALADDTALTAALDTLFPNATRRL.

55–62 (NAGGTGKT) provides a ligand contact to ATP.

Belongs to the LpxK family.

The catalysed reaction is a lipid A disaccharide + ATP = a lipid IVA + ADP + H(+). It functions in the pathway glycolipid biosynthesis; lipid IV(A) biosynthesis; lipid IV(A) from (3R)-3-hydroxytetradecanoyl-[acyl-carrier-protein] and UDP-N-acetyl-alpha-D-glucosamine: step 6/6. Functionally, transfers the gamma-phosphate of ATP to the 4'-position of a tetraacyldisaccharide 1-phosphate intermediate (termed DS-1-P) to form tetraacyldisaccharide 1,4'-bis-phosphate (lipid IVA). The sequence is that of Tetraacyldisaccharide 4'-kinase from Dinoroseobacter shibae (strain DSM 16493 / NCIMB 14021 / DFL 12).